A 403-amino-acid chain; its full sequence is Imidazolonepropionase (403 aa).

Fe(3+) contacts are provided by H68 and H70. H68 and H70 together coordinate Zn(2+). Positions 77, 140, and 173 each coordinate 4-imidazolone-5-propanoate. Residue Y140 participates in N-formimidoyl-L-glutamate binding. Residue H238 participates in Fe(3+) binding. Residue H238 participates in Zn(2+) binding. Q241 is a binding site for 4-imidazolone-5-propanoate. D313 lines the Fe(3+) pocket. A Zn(2+)-binding site is contributed by D313. N-formimidoyl-L-glutamate contacts are provided by N315 and G317. S318 provides a ligand contact to 4-imidazolone-5-propanoate.

It belongs to the metallo-dependent hydrolases superfamily. HutI family. Zn(2+) serves as cofactor. Requires Fe(3+) as cofactor.

It localises to the cytoplasm. The catalysed reaction is 4-imidazolone-5-propanoate + H2O = N-formimidoyl-L-glutamate. Its pathway is amino-acid degradation; L-histidine degradation into L-glutamate; N-formimidoyl-L-glutamate from L-histidine: step 3/3. In terms of biological role, catalyzes the hydrolytic cleavage of the carbon-nitrogen bond in imidazolone-5-propanoate to yield N-formimidoyl-L-glutamate. It is the third step in the universal histidine degradation pathway. The chain is Imidazolonepropionase from Hahella chejuensis (strain KCTC 2396).